Reading from the N-terminus, the 229-residue chain is Potassium/proton antiporter CemA (229 aa).

The next 4 helical transmembrane spans lie at 7–27 (LIPLLYLASIVFLPWWISLSF), 114–134 (IICFVILSSYSILGNEELVIL), 154–174 (ILLLTDLCIGFHSPHGWELMI), and 189–209 (IISGLVSTFPVILDTILKYWI).

This sequence belongs to the CemA family.

The protein localises to the plastid. It localises to the chloroplast inner membrane. The enzyme catalyses K(+)(in) + H(+)(out) = K(+)(out) + H(+)(in). Its function is as follows. Contributes to K(+)/H(+) antiport activity by supporting proton efflux to control proton extrusion and homeostasis in chloroplasts in a light-dependent manner to modulate photosynthesis. Prevents excessive induction of non-photochemical quenching (NPQ) under continuous-light conditions. Indirectly promotes efficient inorganic carbon uptake into chloroplasts. The protein is Potassium/proton antiporter CemA of Fagus sylvatica (Beechnut).